Reading from the N-terminus, the 823-residue chain is Pentatricopeptide repeat-containing protein At4g33990 (823 aa).

PPR repeat units lie at residues 85–115, 116–151, 152–183, 184–214, 215–249, 252–280, 281–311, 312–346, 347–381, 383–413, 414–448, 450–484, 485–515, 516–550, 551–581, and 587–617; these read NVCI…IQNR, DVYA…GLTP, DYRT…GFMW, DVYV…MPVR, DMGS…DSVT, SLLS…GLES, ELFV…MYVR, DLIS…RIQP, DCLT…GWFL, DITI…LPNT, DVIS…GEIA, NQGT…GLYL, DVFV…IPRV, NSVP…GVKP, DHIT…MQTD, and SLKH…MSLQ. Positions 622–697 are type E motif; it reads IWGALLSACR…TPGWSSMEVD (76 aa). Positions 698 to 728 are type E(+) motif; that stretch reads NKVEVFYTGNQTHPMYEEMYRELTALQAKLK. Residues 729 to 823 form a type DYW motif region; the sequence is MIGYVPDHRF…NGVCSCGDYW (95 aa).

This sequence belongs to the PPR family. PCMP-H subfamily.

This chain is Pentatricopeptide repeat-containing protein At4g33990 (EMB2758), found in Arabidopsis thaliana (Mouse-ear cress).